An 805-amino-acid polypeptide reads, in one-letter code: MSGSSWLLLSLVAVTAAQSTIEEQAKTFLDKFNHEAEDLFYQSSLASWNYNTNITEENVQNMNNAGDKWSAFLKEQSTLAQMYPLQEIQNLTVKLQLQALQQNGSSVLSEDKSKRLNTILNTMSTIYSTGKVCNPNNPQECLLLEPGLNEIMANSLDYNERLWAWESWRSEVGKQLRPLYEEYVVLKNEMARANHYEDYGDYWRGDYEVNGVDSYDYSRGQLIEDVEHTFEEIKPLYEHLHAYVRAKLINAYPSYISPIGCLPAHLLGDMWGRFWTNLYSLTVPFGQKPNIDVTDAMVDQAWDAQRIFKEAEKFFVSVGLPNMTQRFWENSMLTDPGNVQKVVCHPTAWDLGKGDFRILMCTKVTMDDFLTAHHEMGHIQYDMAYAAQPFLLRNGANEGFHEAVGEIMSLSAATPKHLKSIGLLSPDFQEDNETEINFLLKQALTIVGTLPFTYMLEKWRWMVFKGEIPKDQWMKKWWEMKREIVGVVEPVPHDETYCDPASLFHVSNDYSFIRYYTRTLYQFQFQEALCQAAKHEGPLHKCDISNSTEAGQKLLNMLRLGKSEPWTLALENVVGAKNMNVRPLLDYFEPLFTWLKDQNKNSFVGWSTDWSPYADQSIKVRISLKSALGNKAYEWNDNEIYLFRSSVAYAMRKYFLEVKNQMILFGEEDVRVANLKPRISFNFFVTAPKNVSDIIPRTEVEKAIRMSRSRINDAFRLNDNSLEFLGIQPTLGPPNQPPVSIWLIVFGVVMGVIVVGIVVLIFTGIRDRKKKNKARNEENPYASIDISKGENNPGFQNTDDVQTSF.

Residues 1–17 form the signal peptide; it reads MSGSSWLLLSLVAVTAA. Residues 18–740 are Extracellular-facing; the sequence is QSTIEEQAKT…LGPPNQPPVS (723 aa). The 589-residue stretch at 19–607 folds into the Peptidase M2 domain; sequence STIEEQAKTF…QNKNSFVGWS (589 aa). Residues Asn53, Asn90, and Asn103 are each glycosylated (N-linked (GlcNAc...) asparagine). The cysteines at positions 133 and 141 are disulfide-linked. Arg169 serves as a coordination point for chloride. Substrate is bound at residue Arg273. Asn322 carries N-linked (GlcNAc...) asparagine glycosylation. The cysteines at positions 344 and 361 are disulfide-linked. 345 to 346 provides a ligand contact to substrate; the sequence is HP. His374 contributes to the Zn(2+) binding site. Glu375 serves as the catalytic Proton acceptor. Zn(2+) contacts are provided by His378 and Glu402. Residue Asn432 is glycosylated (N-linked (GlcNAc...) asparagine). Residues Trp477 and Lys481 each coordinate chloride. Catalysis depends on His505, which acts as the Proton donor. Residue Tyr515 coordinates substrate. Cys530 and Cys542 are oxidised to a cystine. N-linked (GlcNAc...) asparagine glycosylation is present at Asn546. The Collectrin-like domain maps to 614 to 805; that stretch reads ADQSIKVRIS…QNTDDVQTSF (192 aa). Residues 652 to 659 are essential for cleavage by ADAM17; the sequence is RKYFLEVK. Asn690 carries N-linked (GlcNAc...) asparagine glycosylation. The essential for cleavage by TMPRSS11D and TMPRSS2 stretch occupies residues 697–716; it reads RTEVEKAIRMSRSRINDAFR. A helical membrane pass occupies residues 741 to 761; it reads IWLIVFGVVMGVIVVGIVVLI. Residues 762 to 805 are Cytoplasmic-facing; the sequence is FTGIRDRKKKNKARNEENPYASIDISKGENNPGFQNTDDVQTSF. A disordered region spans residues 772–805; it reads NKARNEENPYASIDISKGENNPGFQNTDDVQTSF. Positions 778–786 match the LIR motif; sequence ENPYASIDI. Position 781 is a phosphotyrosine (Tyr781). Residues 781 to 784 carry the Endocytic sorting signal motif; that stretch reads YASI. The SH2-binding motif lies at 781 to 785; sequence YASID. Residue Ser783 is modified to Phosphoserine. Residue Lys788 forms a Glycyl lysine isopeptide (Lys-Gly) (interchain with G-Cter in ubiquitin) linkage. Residues 789 to 805 are compositionally biased toward polar residues; that stretch reads GENNPGFQNTDDVQTSF. The PTB signature appears at 792-795; the sequence is NPGF. The short motif at 803-805 is the PDZ-binding element; it reads TSF.

It belongs to the peptidase M2 family. In terms of assembly, homodimer. Interacts with the catalytically active form of TMPRSS2. Interacts with SLC6A19; this interaction is essential for expression and function of SLC6A19 in intestine. Interacts with ITGA5:ITGB1. Probably interacts (via endocytic sorting signal motif) with AP2M1; the interaction is inhibited by phosphorylation of Tyr-781. Interacts (via PDZ-binding motif) with NHERF1 (via PDZ domains); the interaction may enhance ACE2 membrane residence. Requires Zn(2+) as cofactor. The cofactor is chloride. Post-translationally, proteolytic cleavage by ADAM17 generates a secreted form. Also cleaved by serine proteases: TMPRSS2, TMPRSS11D and HPN/TMPRSS1. In terms of processing, phosphorylated. Phosphorylation at Tyr-781 probably inhibits interaction with AP2M1 and enables interactions with proteins containing SH2 domains. Ubiquitinated. Ubiquitinated on Lys-788 via 'Lys-48'-linked ubiquitin. 'Lys-48'-linked deubiquitinated by USP50 on the Lys-788; leading to its stabilization.

It localises to the secreted. Its subcellular location is the cell membrane. The protein resides in the cytoplasm. The protein localises to the cell projection. It is found in the cilium. It localises to the apical cell membrane. It catalyses the reaction angiotensin II + H2O = angiotensin-(1-7) + L-phenylalanine. The enzyme catalyses angiotensin I + H2O = angiotensin-(1-9) + L-leucine. It carries out the reaction bradykinin(1-8) + H2O = bradykinin(1-7) + L-phenylalanine. The catalysed reaction is neurotensin + H2O = neurotensin-(1-12) + L-leucine. It catalyses the reaction kinetensin + H2O = kinetensin-(1-8) + L-leucine. The enzyme catalyses dynorphin A-(1-13) + H2O = dynorphin A-(1-12) + L-lysine. It carries out the reaction apelin-13 + H2O = apelin-12 + L-phenylalanine. The catalysed reaction is [Pyr1]apelin-13 + H2O = [Pyr1]apelin-12 + L-phenylalanine. It catalyses the reaction apelin-17 + H2O = apelin-16 + L-phenylalanine. Its function is as follows. Essential counter-regulatory carboxypeptidase of the renin-angiotensin hormone system that is a critical regulator of blood volume, systemic vascular resistance, and thus cardiovascular homeostasis. Converts angiotensin I to angiotensin 1-9, a nine-amino acid peptide with anti-hypertrophic effects in cardiomyocytes, and angiotensin II to angiotensin 1-7, which then acts as a beneficial vasodilator and anti-proliferation agent, counterbalancing the actions of the vasoconstrictor angiotensin II. Also removes the C-terminal residue from three other vasoactive peptides, neurotensin, kinetensin, and des-Arg bradykinin, but is not active on bradykinin. Also cleaves other biological peptides, such as apelins, casomorphins and dynorphin A. Plays an important role in amino acid transport by acting as binding partner of amino acid transporter SLC6A19 in intestine, regulating trafficking, expression on the cell surface, and its catalytic activity. The protein is Angiotensin-converting enzyme 2 (ACE2) of Pongo abelii (Sumatran orangutan).